Reading from the N-terminus, the 292-residue chain is ATP synthase gamma chain (292 aa).

The protein belongs to the ATPase gamma chain family. In terms of assembly, F-type ATPases have 2 components, CF(1) - the catalytic core - and CF(0) - the membrane proton channel. CF(1) has five subunits: alpha(3), beta(3), gamma(1), delta(1), epsilon(1). CF(0) has three main subunits: a, b and c.

It localises to the cell membrane. Functionally, produces ATP from ADP in the presence of a proton gradient across the membrane. The gamma chain is believed to be important in regulating ATPase activity and the flow of protons through the CF(0) complex. This is ATP synthase gamma chain from Streptococcus pneumoniae (strain JJA).